Consider the following 429-residue polypeptide: Enolase (429 aa).

Gln-163 is a (2R)-2-phosphoglycerate binding site. Glu-205 acts as the Proton donor in catalysis. The Mg(2+) site is built by Asp-242, Glu-287, and Asp-314. The (2R)-2-phosphoglycerate site is built by Lys-339, Arg-368, Ser-369, and Lys-390. Lys-339 functions as the Proton acceptor in the catalytic mechanism.

This sequence belongs to the enolase family. Mg(2+) serves as cofactor.

The protein localises to the cytoplasm. Its subcellular location is the secreted. It localises to the cell surface. It carries out the reaction (2R)-2-phosphoglycerate = phosphoenolpyruvate + H2O. It participates in carbohydrate degradation; glycolysis; pyruvate from D-glyceraldehyde 3-phosphate: step 4/5. Catalyzes the reversible conversion of 2-phosphoglycerate (2-PG) into phosphoenolpyruvate (PEP). It is essential for the degradation of carbohydrates via glycolysis. In Anaeromyxobacter dehalogenans (strain 2CP-1 / ATCC BAA-258), this protein is Enolase.